The primary structure comprises 118 residues: MRNNKTPFLSAIFTASIRGYQRFFSAFTPSSCRFYPTCSNYALWLLYFESPLSAMGKIAIRILSCNPFCSGGIAYPVTRLKRPSLLQSHKDFNRNFKTITFWLVPTAKSRTTYYIIKV.

This sequence belongs to the UPF0161 family.

It localises to the cell inner membrane. In terms of biological role, could be involved in insertion of integral membrane proteins into the membrane. In Helicobacter pylori (strain P12), this protein is Putative membrane protein insertion efficiency factor.